We begin with the raw amino-acid sequence, 154 residues long: 6,7-dimethyl-8-ribityllumazine synthase (154 aa).

Residues phenylalanine 22, 56–58 (AFE), and 80–82 (AVI) each bind 5-amino-6-(D-ribitylamino)uracil. 85–86 (AT) provides a ligand contact to (2S)-2-hydroxy-3-oxobutyl phosphate. The active-site Proton donor is the histidine 88. Phenylalanine 113 is a 5-amino-6-(D-ribitylamino)uracil binding site. Residue arginine 127 participates in (2S)-2-hydroxy-3-oxobutyl phosphate binding.

The protein belongs to the DMRL synthase family.

The catalysed reaction is (2S)-2-hydroxy-3-oxobutyl phosphate + 5-amino-6-(D-ribitylamino)uracil = 6,7-dimethyl-8-(1-D-ribityl)lumazine + phosphate + 2 H2O + H(+). The protein operates within cofactor biosynthesis; riboflavin biosynthesis; riboflavin from 2-hydroxy-3-oxobutyl phosphate and 5-amino-6-(D-ribitylamino)uracil: step 1/2. Its function is as follows. Catalyzes the formation of 6,7-dimethyl-8-ribityllumazine by condensation of 5-amino-6-(D-ribitylamino)uracil with 3,4-dihydroxy-2-butanone 4-phosphate. This is the penultimate step in the biosynthesis of riboflavin. The chain is 6,7-dimethyl-8-ribityllumazine synthase from Clostridium botulinum (strain Okra / Type B1).